We begin with the raw amino-acid sequence, 240 residues long: Glyceraldehyde 3-phosphate phosphatase (240 aa).

Belongs to the HAD-like hydrolase superfamily. The cofactor is Mg(2+).

Catalyzes the dephosphorylation of D,L-glyceraldehyde 3-phosphate in vitro. The sequence is that of Glyceraldehyde 3-phosphate phosphatase from Pyrococcus furiosus (strain ATCC 43587 / DSM 3638 / JCM 8422 / Vc1).